Consider the following 76-residue polypeptide: ATP synthase subunit 9, mitochondrial (76 aa).

A run of 2 helical transmembrane segments spans residues 14-34 (IATIGLLGAGIGIAIVFAALI) and 52-72 (ILGFALSEATGLFCLMISFLL).

It belongs to the ATPase C chain family. In terms of assembly, F-type ATPases have 2 components, CF(1) - the catalytic core - and CF(0) - the membrane proton channel. CF(1) has five subunits: alpha(3), beta(3), gamma(1), delta(1), epsilon(1). CF(0) has three main subunits: a, b and c.

The protein resides in the mitochondrion membrane. In terms of biological role, mitochondrial membrane ATP synthase (F(1)F(0) ATP synthase or Complex V) produces ATP from ADP in the presence of a proton gradient across the membrane which is generated by electron transport complexes of the respiratory chain. F-type ATPases consist of two structural domains, F(1) - containing the extramembraneous catalytic core and F(0) - containing the membrane proton channel, linked together by a central stalk and a peripheral stalk. During catalysis, ATP synthesis in the catalytic domain of F(1) is coupled via a rotary mechanism of the central stalk subunits to proton translocation. Part of the complex F(0) domain. A homomeric c-ring of probably 10 subunits is part of the complex rotary element. The protein is ATP synthase subunit 9, mitochondrial (ATP9) of Wickerhamomyces canadensis (Yeast).